The primary structure comprises 574 residues: Proline--tRNA ligase (574 aa).

The protein belongs to the class-II aminoacyl-tRNA synthetase family. ProS type 1 subfamily. Homodimer.

It localises to the cytoplasm. It catalyses the reaction tRNA(Pro) + L-proline + ATP = L-prolyl-tRNA(Pro) + AMP + diphosphate. Catalyzes the attachment of proline to tRNA(Pro) in a two-step reaction: proline is first activated by ATP to form Pro-AMP and then transferred to the acceptor end of tRNA(Pro). As ProRS can inadvertently accommodate and process non-cognate amino acids such as alanine and cysteine, to avoid such errors it has two additional distinct editing activities against alanine. One activity is designated as 'pretransfer' editing and involves the tRNA(Pro)-independent hydrolysis of activated Ala-AMP. The other activity is designated 'posttransfer' editing and involves deacylation of mischarged Ala-tRNA(Pro). The misacylated Cys-tRNA(Pro) is not edited by ProRS. The chain is Proline--tRNA ligase from Nitratidesulfovibrio vulgaris (strain DP4) (Desulfovibrio vulgaris).